We begin with the raw amino-acid sequence, 1162 residues long: Reticulon-4 (1162 aa).

At Met1 the chain carries N-acetylmethionine. Residues 1–183 (MEDIDQSSLV…ALPAASEPVI (183 aa)) form a disordered region. At 1–988 (MEDIDQSSLV…LYWRDIKKTG (988 aa)) the chain is on the cytoplasmic side. Phosphoserine is present on residues Ser7 and Ser16. Over residues 7-16 (SSLVSSSADS) the composition is skewed to low complexity. Acidic residues predominate over residues 31–54 (EPEDEEDEEDEEEEEDDEDLEELE). Pro residues predominate over residues 85–99 (PPAPRGPLPAAPPTA). Residue Ser105 is modified to Phosphoserine. Over residues 109–127 (SPAASAPSLPPAAAVLPSK) the composition is skewed to low complexity. A phosphoserine mark is found at Ser145, Ser165, Ser167, Ser329, and Ser344. At Thr348 the chain carries Phosphothreonine. Over residues 408 to 422 (SLEQKGHGKDSESRN) the composition is skewed to basic and acidic residues. Residues 408–432 (SLEQKGHGKDSESRNENASFPRTPE) form a disordered region. Ser426 carries the phosphoserine modification. At Thr430 the chain carries Phosphothreonine. A phosphoserine mark is found at Ser489, Ser690, Ser727, Ser768, and Ser832. A disordered region spans residues 711-730 (ELVDDSSPESEPVDLFSDDS). The span at 713-730 (VDDSSPESEPVDLFSDDS) shows a compositional bias: acidic residues. Thr834 bears the Phosphothreonine mark. Phosphoserine occurs at positions 857 and 961. In terms of domain architecture, Reticulon spans 975–1162 (VVDLLYWRDI…KIPGLKRKAE (188 aa)). Residues 989–1009 (VVFGASLFLLLSLTVFSIVSV) form a helical membrane-spanning segment. Residues 1010 to 1078 (TAYIALALLS…VNSTIKELRR (69 aa)) lie on the Lumenal side of the membrane. Lys1074 carries the N6-acetyllysine modification. The chain crosses the membrane as a helical span at residues 1079–1099 (LFLVDDLVDSLKFAVLMWVFT). The Cytoplasmic portion of the chain corresponds to 1100–1162 (YVGALFNGLT…KIPGLKRKAE (63 aa)).

In terms of assembly, binds to RTN4R. Interacts with ATL1. Interacts with TMEM170A. Interacts with RTN4IP1. As to quaternary structure, interacts in trans with CNTNAP1. Interacts with REEP5. Interacts with GPR50. Interacts with synaptic plasticity regulator PANTS; the interaction results in enhanced RTN4-mediated inhibition of AMPA receptor clustering. Homodimer. Interacts with BAD/Bcl-xl and BCL2. Interact with RTN3. Interacts with NGBR. Interacts with SPTLC1. Interacts with GRAMD4. Interacts with CDH5. Interacts with BACE1 and BACE2. Interacts with REEP5. Interacts with RETREG3. In terms of assembly, interacts with BACE1 and BACE2. Interacts with TMEM33. In terms of tissue distribution, expressed in cardiomyocytes (at protein level). Highly expressed in brain but not deteceted in aorta, femoral and carotid arteries. Main isoform expressed in neurons. Expressed in cardiomyocytes (at protein level). Expressed in splenocytes, T-cells, B-cells, bone marrow derived dendritic cells and macrophages (at protein level). Expressed in neurons. Highly expressed in endothelial cells and vascular smooth muscle cells, including blood vessels and mesenteric arteries. Expressed in bronchial and alveolar epithelial cells as well as vascular endothelial cells of lungs. As to expression, expressed in B-cells, bone marrow dendritic cells and macrophages (at protein level). In terms of tissue distribution, expressed in cardiomyocytes. Expressed at very low levels in neurons.

It is found in the endoplasmic reticulum membrane. It localises to the cell membrane. The protein localises to the synapse. Its subcellular location is the cell junction. Its function is as follows. Required to induce the formation and stabilization of endoplasmic reticulum (ER) tubules. They regulate membrane morphogenesis in the ER by promoting tubular ER production. They influence nuclear envelope expansion, nuclear pore complex formation and proper localization of inner nuclear membrane proteins. However each isoform have specific functions mainly depending on their tissue expression specificities. In terms of biological role, developmental neurite growth regulatory factor with a role as a negative regulator of axon-axon adhesion and growth, and as a facilitator of neurite branching. Regulates neurite fasciculation, branching and extension in the developing nervous system. Involved in down-regulation of growth, stabilization of wiring and restriction of plasticity in the adult CNS. Regulates the radial migration of cortical neurons via an RTN4R-LINGO1 containing receptor complex. Acts as a negative regulator of central nervous system angiogenesis. Inhibits spreading, migration and sprouting of primary brain microvascular endothelial cells (MVECs). Also induces the retraction of MVECs lamellipodia and filopodia in a ROCK pathway-dependent manner. Mainly function in endothelial cells and vascular smooth muscle cells, is also involved in immune system regulation. Modulator of vascular remodeling, promotes the migration of endothelial cells but inhibits the migration of vascular smooth muscle cells. Regulates endothelial sphingolipid biosynthesis with direct effects on vascular function and blood pressure. Inhibits serine palmitoyltransferase, SPTLC1, the rate-limiting enzyme of the novo sphingolipid biosynthetic pathway, thereby controlling production of endothelial sphingosine-1-phosphate (S1P). Required to promote macrophage homing and functions such as cytokine/chemokine gene expression involved in angiogenesis, arteriogenesis and tissue repair. Mediates ICAM1 induced transendothelial migration of leukocytes such as monocytes and neutrophils and acute inflammation. Necessary for immune responses triggered by nucleic acid sensing TLRs, such as TLR9, is required for proper TLR9 location to endolysosomes. Also involved in immune response to LPS. Plays a role in liver regeneration through the modulation of hepatocytes proliferation. Reduces the anti-apoptotic activity of Bcl-xl and Bcl-2. This is likely consecutive to their change in subcellular location, from the mitochondria to the endoplasmic reticulum, after binding and sequestration. With isoform C, inhibits BACE1 activity and amyloid precursor protein processing. Functionally, regulates cardiomyocyte apoptosis upon hypoxic conditions. With isoform B, inhibits BACE1 activity and amyloid precursor protein processing. This chain is Reticulon-4, found in Mus musculus (Mouse).